Here is a 115-residue protein sequence, read N- to C-terminus: Large ribosomal subunit protein bL20 (115 aa).

This sequence belongs to the bacterial ribosomal protein bL20 family.

Binds directly to 23S ribosomal RNA and is necessary for the in vitro assembly process of the 50S ribosomal subunit. It is not involved in the protein synthesizing functions of that subunit. This chain is Large ribosomal subunit protein bL20, found in Myxococcus xanthus (strain DK1622).